The chain runs to 135 residues: MNYDLSQKFKVYLEFSGKKYRIYGQSIGISHLDLGGGSSGSLLLNDKKQIAGIYFGVDGANNELGLAQLLRWKPETYHNDEARSVAYDLIFGNKNTTKYYAQFVKEHKTHLYEQIKQINNDEFRFVEKTKRHNLG.

The protein belongs to the MG067/MG068/MG395 family.

This is an uncharacterized protein from Mycoplasma pneumoniae (strain ATCC 29342 / M129 / Subtype 1) (Mycoplasmoides pneumoniae).